A 1532-amino-acid chain; its full sequence is IgA-specific serine endopeptidase autotransporter (1532 aa).

Positions 1–27 (MKAKRFKINAISLSIFLAYALTPYSEA) are cleaved as a signal peptide. One can recognise a Peptidase S6 domain in the interval 28-322 (ALVRDDVDYQ…NIYKKEFADK (295 aa)). The active site involves Ser-278. 2 disordered regions span residues 979 to 1136 (GRPV…KDNS) and 1166 to 1217 (LEDE…NTEL). The span at 989–1004 (AANTASQAQKATQTDG) shows a compositional bias: polar residues. Over residues 1045 to 1101 (EAEKVARQKDEEAKRKAAEIARQQEEARKAAELAAKQKAEAERKARELARQKAEEAS) the composition is skewed to basic and acidic residues. Positions 1107–1116 (KPKRRRRRAI) are enriched in basic residues. Positions 1207–1217 (SDKHPQDNTEL) are enriched in basic and acidic residues. The Autotransporter domain occupies 1280-1532 (ADAEKNSVWM…SGQIKIQIRF (253 aa)).

It is found in the periplasm. The protein resides in the secreted. It localises to the cell surface. The protein localises to the cell outer membrane. It catalyses the reaction Cleavage of immunoglobulin A molecules at certain Pro-|-Xaa bonds in the hinge region. No small molecule substrates are known.. Its function is as follows. This protease is specific for immunoglobulin A. This chain is IgA-specific serine endopeptidase autotransporter (iga), found in Neisseria gonorrhoeae.